The following is a 387-amino-acid chain: EARP-interacting protein homolog (387 aa).

WD repeat units lie at residues 132 to 172 (SAHG…AKAT), 182 to 222 (KGQL…QIYC), 226 to 266 (AHGQ…EPVK), and 270 to 310 (EHSH…SEPF). Residues 309–337 (PFGHLVDDDDLSDPEENQQEDKGKEPLQD) are disordered. Residues 315–326 (DDDDLSDPEENQ) show a composition bias toward acidic residues. Residues 345–385 (EHEDSVYAVEWSAADPWLFASLSYDGRLVINRVPRALKYRI) form a WD 5 repeat.

It belongs to the WD repeat EIPR1 family.

Its subcellular location is the golgi apparatus. It localises to the trans-Golgi network. In terms of biological role, may act as a component of endosomal retrieval machinery that is involved in protein transport from early endosomes to either recycling endosomes or the trans-Golgi network. The polypeptide is EARP-interacting protein homolog (Danio rerio (Zebrafish)).